Consider the following 328-residue polypeptide: D-cysteine desulfhydrase (328 aa).

Residue Lys-51 is modified to N6-(pyridoxal phosphate)lysine.

It belongs to the ACC deaminase/D-cysteine desulfhydrase family. Homodimer. Pyridoxal 5'-phosphate is required as a cofactor.

The catalysed reaction is D-cysteine + H2O = hydrogen sulfide + pyruvate + NH4(+) + H(+). Catalyzes the alpha,beta-elimination reaction of D-cysteine and of several D-cysteine derivatives. It could be a defense mechanism against D-cysteine. The protein is D-cysteine desulfhydrase of Klebsiella pneumoniae (strain 342).